The chain runs to 451 residues: Tubulin alpha chain (451 aa).

Gln-11 provides a ligand contact to GTP. N6-acetyllysine is present on Lys-40. GTP is bound by residues Glu-71, Ser-140, Gly-144, Thr-145, Thr-179, Asn-206, and Asn-228. Mg(2+) is bound at residue Glu-71. Residue Glu-254 is part of the active site.

This sequence belongs to the tubulin family. In terms of assembly, dimer of alpha and beta chains. A typical microtubule is a hollow water-filled tube with an outer diameter of 25 nm and an inner diameter of 15 nM. Alpha-beta heterodimers associate head-to-tail to form protofilaments running lengthwise along the microtubule wall with the beta-tubulin subunit facing the microtubule plus end conferring a structural polarity. Microtubules usually have 13 protofilaments but different protofilament numbers can be found in some organisms and specialized cells. Requires Mg(2+) as cofactor. Post-translationally, undergoes a tyrosination/detyrosination cycle, the cyclic removal and re-addition of a C-terminal tyrosine residue by the enzymes tubulin tyrosine carboxypeptidase (TTCP) and tubulin tyrosine ligase (TTL), respectively. In terms of processing, acetylation of alpha chains at Lys-40 stabilizes microtubules and affects affinity and processivity of microtubule motors. This modification has a role in multiple cellular functions, ranging from cell motility, cell cycle progression or cell differentiation to intracellular trafficking and signaling. Actively expressed in the lens but does not seem to be lens-specific.

The protein resides in the cytoplasm. It is found in the cytoskeleton. The enzyme catalyses GTP + H2O = GDP + phosphate + H(+). Its function is as follows. Tubulin is the major constituent of microtubules, a cylinder consisting of laterally associated linear protofilaments composed of alpha- and beta-tubulin heterodimers. Microtubules grow by the addition of GTP-tubulin dimers to the microtubule end, where a stabilizing cap forms. Below the cap, tubulin dimers are in GDP-bound state, owing to GTPase activity of alpha-tubulin. The chain is Tubulin alpha chain from Enteroctopus dofleini (North Pacific giant octopus).